The chain runs to 576 residues: Proline--tRNA ligase (576 aa).

This sequence belongs to the class-II aminoacyl-tRNA synthetase family. ProS type 1 subfamily. As to quaternary structure, homodimer.

The protein resides in the cytoplasm. It carries out the reaction tRNA(Pro) + L-proline + ATP = L-prolyl-tRNA(Pro) + AMP + diphosphate. Its function is as follows. Catalyzes the attachment of proline to tRNA(Pro) in a two-step reaction: proline is first activated by ATP to form Pro-AMP and then transferred to the acceptor end of tRNA(Pro). As ProRS can inadvertently accommodate and process non-cognate amino acids such as alanine and cysteine, to avoid such errors it has two additional distinct editing activities against alanine. One activity is designated as 'pretransfer' editing and involves the tRNA(Pro)-independent hydrolysis of activated Ala-AMP. The other activity is designated 'posttransfer' editing and involves deacylation of mischarged Ala-tRNA(Pro). The misacylated Cys-tRNA(Pro) is not edited by ProRS. The protein is Proline--tRNA ligase of Finegoldia magna (strain ATCC 29328 / DSM 20472 / WAL 2508) (Peptostreptococcus magnus).